A 171-amino-acid chain; its full sequence is Protein TraV (171 aa).

A signal peptide spans 1–18 (MKQTSFFIPLLGTLLLYG). Cys-19 carries N-palmitoyl cysteine lipidation. Cys-19 carries the S-diacylglycerol cysteine lipid modification.

The protein localises to the cell outer membrane. In terms of biological role, involved in F pilus assembly. Appears to facilitate the polymerization of inner membrane-located pilin subunits into extracellular F pilus filaments. The chain is Protein TraV (traV) from Escherichia coli (strain K12).